The following is a 458-amino-acid chain: tRNA modification GTPase MnmE (458 aa).

Residues Arg23, Glu87, and Arg126 each coordinate (6S)-5-formyl-5,6,7,8-tetrahydrofolate. Residues 224 to 380 enclose the TrmE-type G domain; that stretch reads GLSMVIVGKP…LKSKIKDLFF (157 aa). Asn234 contacts K(+). Residues 234–239, 253–259, and 278–281 each bind GTP; these read NVGKSS, TDIAGTT, and DTAG. A Mg(2+)-binding site is contributed by Ser238. The K(+) site is built by Thr253, Ile255, and Thr258. Thr259 lines the Mg(2+) pocket. Lys458 is a (6S)-5-formyl-5,6,7,8-tetrahydrofolate binding site.

It belongs to the TRAFAC class TrmE-Era-EngA-EngB-Septin-like GTPase superfamily. TrmE GTPase family. In terms of assembly, homodimer. Heterotetramer of two MnmE and two MnmG subunits. It depends on K(+) as a cofactor.

The protein localises to the cytoplasm. In terms of biological role, exhibits a very high intrinsic GTPase hydrolysis rate. Involved in the addition of a carboxymethylaminomethyl (cmnm) group at the wobble position (U34) of certain tRNAs, forming tRNA-cmnm(5)s(2)U34. The sequence is that of tRNA modification GTPase MnmE from Clostridium perfringens (strain ATCC 13124 / DSM 756 / JCM 1290 / NCIMB 6125 / NCTC 8237 / Type A).